The sequence spans 249 residues: ATP synthase subunit a (249 aa).

Helical transmembrane passes span 33–53, 83–103, 113–133, 139–159, 188–208, and 216–236; these read YMLIAVAIISLLMLASGAQLV, FFPLIFSLFMFICVSNLIGII, LIVTAALALLVFFTVLIYGVA, FFSIFVPHGVPGYILPLVMFI, VFAGFVAMLGFSLGALGWVGG, and VALYALEILVAFLQAYVFAIL.

It belongs to the ATPase A chain family. In terms of assembly, F-type ATPases have 2 components, CF(1) - the catalytic core - and CF(0) - the membrane proton channel. CF(1) has five subunits: alpha(3), beta(3), gamma(1), delta(1), epsilon(1). CF(0) has three main subunits: a(1), b(2) and c(9-12). The alpha and beta chains form an alternating ring which encloses part of the gamma chain. CF(1) is attached to CF(0) by a central stalk formed by the gamma and epsilon chains, while a peripheral stalk is formed by the delta and b chains.

It is found in the cell inner membrane. Key component of the proton channel; it plays a direct role in the translocation of protons across the membrane. The polypeptide is ATP synthase subunit a (Bradyrhizobium diazoefficiens (strain JCM 10833 / BCRC 13528 / IAM 13628 / NBRC 14792 / USDA 110)).